Reading from the N-terminus, the 207-residue chain is Uracil phosphoribosyltransferase (207 aa).

5-phospho-alpha-D-ribose 1-diphosphate-binding positions include arginine 77, arginine 102, and aspartate 129–serine 137. Uracil contacts are provided by residues isoleucine 192 and glycine 197–alanine 199. Aspartate 198 contributes to the 5-phospho-alpha-D-ribose 1-diphosphate binding site.

The protein belongs to the UPRTase family. The cofactor is Mg(2+).

It catalyses the reaction UMP + diphosphate = 5-phospho-alpha-D-ribose 1-diphosphate + uracil. The protein operates within pyrimidine metabolism; UMP biosynthesis via salvage pathway; UMP from uracil: step 1/1. With respect to regulation, allosterically activated by GTP. In terms of biological role, catalyzes the conversion of uracil and 5-phospho-alpha-D-ribose 1-diphosphate (PRPP) to UMP and diphosphate. The chain is Uracil phosphoribosyltransferase from Ureaplasma urealyticum serovar 10 (strain ATCC 33699 / Western).